Reading from the N-terminus, the 265-residue chain is Bidirectional sugar transporter NEC1 (265 aa).

At M1 to D8 the chain is on the extracellular side. A helical transmembrane segment spans residues L9–V29. A MtN3/slv 1 domain is found at F11–K97. At P30–Y44 the chain is on the cytoplasmic side. A helical membrane pass occupies residues Q45 to L65. Residues R66–L71 are Extracellular-facing. A helical membrane pass occupies residues I72–F92. Residues Y93 to G103 are Cytoplasmic-facing. A helical membrane pass occupies residues W104–A124. Residues E125–V130 lie on the Extracellular side of the membrane. A helical membrane pass occupies residues M131–I151. Positions I132–K216 constitute a MtN3/slv 2 domain. Residues M152–M164 are Cytoplasmic-facing. The helical transmembrane segment at P165–F185 threads the bilayer. At K186–Y190 the chain is on the extracellular side. Residues I191–V211 form a helical membrane-spanning segment. Residues Y212–K265 are Cytoplasmic-facing.

It belongs to the SWEET sugar transporter family. Forms homooligomers and/or heterooligomers. Highly expressed in nectary tissue and weakly in the stamen, especially in stomium cells and in the upper part of the filaments.

The protein localises to the cell membrane. Functionally, mediates both low-affinity uptake and efflux of sugar across the plasma membrane. Promotes the formation of phloem bundles in mid-veins. Probably involved in the development of stomium cells that control anther opening time. Required for pollen viability. This Petunia hybrida (Petunia) protein is Bidirectional sugar transporter NEC1 (NEC1).